The following is a 450-amino-acid chain: Phosphopentomutase (450 aa).

Residue Ser-93 is the Phosphoserine intermediate of the active site. Positions 93, 231, 233, and 235 each coordinate Mg(2+). Position 93 is a phosphoserine; by autocatalysis (Ser-93).

This sequence belongs to the phosphohexose mutase family. Homotetramer. The cofactor is Mg(2+). In terms of processing, activated by phosphorylation.

It carries out the reaction alpha-D-ribose 1-phosphate = D-ribose 5-phosphate. It catalyses the reaction 2-deoxy-alpha-D-ribose 1-phosphate = 2-deoxy-D-ribose 5-phosphate. Catalyzes the conversion of deoxyribose 1-phosphate to deoxyribose 5-phosphate. Also shows weak activity with glucose 1-phosphate and mannose 1-phosphate. Could be involved in pentose biosynthesis. In Thermococcus kodakarensis (strain ATCC BAA-918 / JCM 12380 / KOD1) (Pyrococcus kodakaraensis (strain KOD1)), this protein is Phosphopentomutase.